The following is a 170-amino-acid chain: Shikimate kinase (170 aa).

11 to 16 (LSGKST) serves as a coordination point for ATP. Serine 15 lines the Mg(2+) pocket. Substrate-binding residues include aspartate 33, arginine 57, and glycine 79. Residue arginine 119 coordinates ATP. Position 137 (arginine 137) interacts with substrate.

It belongs to the shikimate kinase family. In terms of assembly, monomer. Mg(2+) is required as a cofactor.

It is found in the cytoplasm. It catalyses the reaction shikimate + ATP = 3-phosphoshikimate + ADP + H(+). Its pathway is metabolic intermediate biosynthesis; chorismate biosynthesis; chorismate from D-erythrose 4-phosphate and phosphoenolpyruvate: step 5/7. Catalyzes the specific phosphorylation of the 3-hydroxyl group of shikimic acid using ATP as a cosubstrate. The sequence is that of Shikimate kinase from Clostridium botulinum (strain Langeland / NCTC 10281 / Type F).